The primary structure comprises 146 residues: 3-dehydroquinate dehydratase (146 aa).

The Proton acceptor role is filled by tyrosine 24. Substrate-binding residues include asparagine 73, histidine 79, and aspartate 86. The active-site Proton donor is the histidine 99. Residues 100-101 (LS) and arginine 110 each bind substrate.

This sequence belongs to the type-II 3-dehydroquinase family. In terms of assembly, homododecamer.

The catalysed reaction is 3-dehydroquinate = 3-dehydroshikimate + H2O. Its pathway is metabolic intermediate biosynthesis; chorismate biosynthesis; chorismate from D-erythrose 4-phosphate and phosphoenolpyruvate: step 3/7. Functionally, catalyzes a trans-dehydration via an enolate intermediate. This Shewanella oneidensis (strain ATCC 700550 / JCM 31522 / CIP 106686 / LMG 19005 / NCIMB 14063 / MR-1) protein is 3-dehydroquinate dehydratase.